The primary structure comprises 528 residues: Sphingosine-1-phosphate lyase (528 aa).

A helical transmembrane segment spans residues 13-35 (PAKLVLATAGITAASILAYQAIT). K324 bears the N6-(pyridoxal phosphate)lysine mark.

It belongs to the group II decarboxylase family. Sphingosine-1-phosphate lyase subfamily. Pyridoxal 5'-phosphate is required as a cofactor.

It is found in the endoplasmic reticulum membrane. The catalysed reaction is sphinganine 1-phosphate = hexadecanal + phosphoethanolamine. It functions in the pathway lipid metabolism; sphingolipid metabolism. Cleaves phosphorylated sphingoid bases (PSBs), such as sphingosine-1-phosphate, into fatty aldehydes and phosphoethanolamine. Sphingosine-1-phosphate (S1P) probably acts intracellularly as a second messenger perhaps by promoting cell proliferation; the absence of S1P lyase increases its concentration. This leads to increased lateral pseudopod formation as well as defects in the efficiency of chemotaxis. Overexpression of S1P lyase causes decreased growth rates, entry into stationary phase at lower cell density and increased sensitivity to the antitumor agents cisplatin and carboplatin; these effects are more pronounced in cells that express more enzyme. The polypeptide is Sphingosine-1-phosphate lyase (sglA) (Dictyostelium discoideum (Social amoeba)).